The chain runs to 663 residues: MIEKMQGSRMDEQRCSFPPPLKTEEDYIPYPSVHEVLGREGPFPLILLPQFGGYWIEGTNHEITSIPETEPLQSPTTKVKLECNPTARIYRKHFLGKEHFNYYSLDAALGHLVFSLKYDVIGDQEHLRLLLRTKCRTYHDVIPISCLTEFPNVVQMAKLVCEDVNVDRFYPVLYPKASRLIVTFDEHVISNNFKFGVIYQKLGQTSEEELFSTNEESPAFVEFLEFLGQKVKLQDFKGFRGGLDVTHGQTGTESVYCNFRNKEIMFHVSTKLPYTEGDAQQLQRKRHIGNDIVAVVFQDENTPFVPDMIASNFLHAYVVVQAEGGGPDGPLYKVSVTARDDVPFFGPPLPDPAVFRKGPEFQEFLLTKLINAEYACYKAEKFAKLEERTRAALLETLYEELHIHSQSMMGLGGDEDKMENGSGGGGFFESFKRVIRSRSQSMDAMGLSNKKPNTVSTSHSGSFAPNNPDLAKAAGISLIVPGKSPTRKKSGPFGSRRSSAIGIENIQEVQEKRESPPAGQKTPDSGHVSQEPKSENSSTQSSPEMPTTKNRAETAAQRAEALKDFSRSSSSASSFASVVEETEGVDGEDTGLESVSSSGTPHKRDSFIYSTWLEDSVSTTSGGSSPGPSRSPHPDAGKLGDPACPEIKIQLEASEQHMPQLGC.

A GoLoco domain is found at 1 to 17 (MIEKMQGSRMDEQRCSF). The tract at residues 1 to 23 (MIEKMQGSRMDEQRCSFPPPLKT) is disordered. Position 17 is a phosphoserine (Phe-17). In terms of domain architecture, Rap-GAP spans 181–397 (IVTFDEHVIS…RTRAALLETL (217 aa)). Position 441 is a phosphoserine (Ser-441). 2 disordered regions span residues 442–604 (MDAM…PHKR) and 616–645 (SVST…PACP). Polar residues predominate over residues 450 to 465 (KKPNTVSTSHSGSFAP). Residues Ser-484, Ser-499, Ser-515, Ser-541, and Ser-542 each carry the phosphoserine modification. A compositionally biased stretch (polar residues) spans 535 to 549 (ENSSTQSSPEMPTTK). Low complexity predominate over residues 567–579 (RSSSSASSFASVV). Over residues 580 to 591 (EETEGVDGEDTG) the composition is skewed to acidic residues. The segment covering 616–630 (SVSTTSGGSSPGPSR) has biased composition (low complexity).

As to quaternary structure, homodimer and heterodimer with RAP1B. In terms of tissue distribution, significant expression seen in the brain, kidney and pancreas. Abundant in the cerebral cortex and expressed at much lower levels in the spinal cord. Not detected in the lymphoid tissues.

It is found in the golgi apparatus membrane. Functionally, GTPase activator for the nuclear Ras-related regulatory protein RAP-1A (KREV-1), converting it to the putatively inactive GDP-bound state. The protein is Rap1 GTPase-activating protein 1 (RAP1GAP) of Homo sapiens (Human).